A 158-amino-acid chain; its full sequence is NAD(P)H-quinone oxidoreductase subunit J, chloroplastic (158 aa).

The protein belongs to the complex I 30 kDa subunit family. NDH is composed of at least 16 different subunits, 5 of which are encoded in the nucleus.

Its subcellular location is the plastid. The protein localises to the chloroplast thylakoid membrane. The catalysed reaction is a plastoquinone + NADH + (n+1) H(+)(in) = a plastoquinol + NAD(+) + n H(+)(out). The enzyme catalyses a plastoquinone + NADPH + (n+1) H(+)(in) = a plastoquinol + NADP(+) + n H(+)(out). Its function is as follows. NDH shuttles electrons from NAD(P)H:plastoquinone, via FMN and iron-sulfur (Fe-S) centers, to quinones in the photosynthetic chain and possibly in a chloroplast respiratory chain. The immediate electron acceptor for the enzyme in this species is believed to be plastoquinone. Couples the redox reaction to proton translocation, and thus conserves the redox energy in a proton gradient. The chain is NAD(P)H-quinone oxidoreductase subunit J, chloroplastic from Buxus microphylla (Littleleaf boxwood).